Here is a 645-residue protein sequence, read N- to C-terminus: DNA mismatch repair protein MutL (645 aa).

2 disordered regions span residues 353–381 (RPENQLGGSVPAAAEPRPTGPDAGEFGPQ) and 395–420 (QGEPFARPAGGGSGSGYQYSPRPTTG).

It belongs to the DNA mismatch repair MutL/HexB family.

Its function is as follows. This protein is involved in the repair of mismatches in DNA. It is required for dam-dependent methyl-directed DNA mismatch repair. May act as a 'molecular matchmaker', a protein that promotes the formation of a stable complex between two or more DNA-binding proteins in an ATP-dependent manner without itself being part of a final effector complex. In Pseudomonas syringae pv. tomato (strain ATCC BAA-871 / DC3000), this protein is DNA mismatch repair protein MutL.